A 481-amino-acid chain; its full sequence is Aromatic amino acid aminotransferase C1773.13 (481 aa).

This sequence belongs to the class-I pyridoxal-phosphate-dependent aminotransferase family. Pyridoxal 5'-phosphate is required as a cofactor.

The protein localises to the cytoplasm. The enzyme catalyses an aromatic L-alpha-amino acid + 2-oxoglutarate = an aromatic oxo-acid + L-glutamate. Has aromatic amino acid transaminase activity. This chain is Aromatic amino acid aminotransferase C1773.13, found in Schizosaccharomyces pombe (strain 972 / ATCC 24843) (Fission yeast).